The chain runs to 304 residues: Cytochrome c biogenesis protein CcsA (304 aa).

8 consecutive transmembrane segments (helical) span residues 8–28 (LVTS…PIAF), 37–57 (PGVV…QLVL), 63–83 (GHFP…ACTL), 96–116 (IVAA…SFAL), 141–161 (VIMV…AVLV), 212–232 (TITV…VWAN), 246–263 (TWAL…HTRL), and 275–295 (VAVV…LLGI).

Belongs to the CcmF/CycK/Ccl1/NrfE/CcsA family. As to quaternary structure, may interact with ccs1.

It localises to the cellular thylakoid membrane. Required during biogenesis of c-type cytochromes (cytochrome c6 and cytochrome f) at the step of heme attachment. The polypeptide is Cytochrome c biogenesis protein CcsA (Synechococcus sp. (strain CC9902)).